Here is a 282-residue protein sequence, read N- to C-terminus: Shikimate kinase (282 aa).

86–96 (PIKSGLSSSSA) lines the ATP pocket.

This sequence belongs to the GHMP kinase family. Archaeal shikimate kinase subfamily.

It localises to the cytoplasm. The enzyme catalyses shikimate + ATP = 3-phosphoshikimate + ADP + H(+). Its pathway is metabolic intermediate biosynthesis; chorismate biosynthesis; chorismate from D-erythrose 4-phosphate and phosphoenolpyruvate: step 5/7. The sequence is that of Shikimate kinase (aroK) from Methanocaldococcus jannaschii (strain ATCC 43067 / DSM 2661 / JAL-1 / JCM 10045 / NBRC 100440) (Methanococcus jannaschii).